Consider the following 240-residue polypeptide: Zinc import ATP-binding protein ZnuC (240 aa).

Residues 1 to 219 enclose the ABC transporter domain; the sequence is MSLLSIAALD…PAYRAMFGLD (219 aa). 36 to 43 contributes to the ATP binding site; sequence GPNGSGKT.

This sequence belongs to the ABC transporter superfamily. Zinc importer (TC 3.A.1.15.5) family. As to quaternary structure, the complex is composed of two ATP-binding proteins (ZnuC), two transmembrane proteins (ZnuB) and a solute-binding protein (ZnuA).

It is found in the cell inner membrane. It carries out the reaction Zn(2+)(out) + ATP(in) + H2O(in) = Zn(2+)(in) + ADP(in) + phosphate(in) + H(+)(in). In terms of biological role, part of the ABC transporter complex ZnuABC involved in zinc import. Responsible for energy coupling to the transport system. The protein is Zinc import ATP-binding protein ZnuC of Chromohalobacter salexigens (strain ATCC BAA-138 / DSM 3043 / CIP 106854 / NCIMB 13768 / 1H11).